Here is a 412-residue protein sequence, read N- to C-terminus: Zinc finger protein 821 (412 aa).

Residues R26–K83 form a disordered region. Residues S58–Q67 are compositionally biased toward acidic residues. 2 consecutive C2H2-type zinc fingers follow at residues E116–H140 and Y150–H172. Residues K257–Q366 are a coiled coil. A disordered region spans residues R278–R319.

The protein belongs to the krueppel C2H2-type zinc-finger protein family.

It localises to the nucleus. Functionally, may be involved in transcriptional regulation. This is Zinc finger protein 821 (ZNF821) from Homo sapiens (Human).